The primary structure comprises 334 residues: Holliday junction branch migration complex subunit RuvB (334 aa).

A large ATPase domain (RuvB-L) region spans residues 1 to 180 (MSEFLTPERT…FGIILELDFY (180 aa)). Residues Leu-19, Arg-20, Gly-61, Lys-64, Thr-65, Thr-66, 127 to 129 (EDF), Arg-170, Tyr-180, and Arg-217 contribute to the ATP site. Thr-65 is a binding site for Mg(2+). Positions 181–251 (TVKELKEIIK…IVLKTMEVLN (71 aa)) are small ATPAse domain (RuvB-S). The tract at residues 254-334 (AEGLDEFDRK…KYEVPENRLF (81 aa)) is head domain (RuvB-H). Residues Arg-309 and Arg-314 each contribute to the DNA site.

Belongs to the RuvB family. Homohexamer. Forms an RuvA(8)-RuvB(12)-Holliday junction (HJ) complex. HJ DNA is sandwiched between 2 RuvA tetramers; dsDNA enters through RuvA and exits via RuvB. An RuvB hexamer assembles on each DNA strand where it exits the tetramer. Each RuvB hexamer is contacted by two RuvA subunits (via domain III) on 2 adjacent RuvB subunits; this complex drives branch migration. In the full resolvosome a probable DNA-RuvA(4)-RuvB(12)-RuvC(2) complex forms which resolves the HJ.

The protein localises to the cytoplasm. It catalyses the reaction ATP + H2O = ADP + phosphate + H(+). Functionally, the RuvA-RuvB-RuvC complex processes Holliday junction (HJ) DNA during genetic recombination and DNA repair, while the RuvA-RuvB complex plays an important role in the rescue of blocked DNA replication forks via replication fork reversal (RFR). RuvA specifically binds to HJ cruciform DNA, conferring on it an open structure. The RuvB hexamer acts as an ATP-dependent pump, pulling dsDNA into and through the RuvAB complex. RuvB forms 2 homohexamers on either side of HJ DNA bound by 1 or 2 RuvA tetramers; 4 subunits per hexamer contact DNA at a time. Coordinated motions by a converter formed by DNA-disengaged RuvB subunits stimulates ATP hydrolysis and nucleotide exchange. Immobilization of the converter enables RuvB to convert the ATP-contained energy into a lever motion, pulling 2 nucleotides of DNA out of the RuvA tetramer per ATP hydrolyzed, thus driving DNA branch migration. The RuvB motors rotate together with the DNA substrate, which together with the progressing nucleotide cycle form the mechanistic basis for DNA recombination by continuous HJ branch migration. Branch migration allows RuvC to scan DNA until it finds its consensus sequence, where it cleaves and resolves cruciform DNA. This Thermotoga petrophila (strain ATCC BAA-488 / DSM 13995 / JCM 10881 / RKU-1) protein is Holliday junction branch migration complex subunit RuvB.